A 151-amino-acid polypeptide reads, in one-letter code: UPF0208 membrane protein ESA_00924 (151 aa).

Helical transmembrane passes span 46-65 (FAIR…QIAL) and 69-91 (LGPA…WWLG).

It belongs to the UPF0208 family.

Its subcellular location is the cell inner membrane. This Cronobacter sakazakii (strain ATCC BAA-894) (Enterobacter sakazakii) protein is UPF0208 membrane protein ESA_00924.